A 778-amino-acid polypeptide reads, in one-letter code: Probable cation-transporting ATPase exp7 (778 aa).

The Cytoplasmic segment spans residues 1–37 (MDKNKIMGLTQREVKERQAEGLVNDFTASASTSTWQI). A helical transmembrane segment spans residues 38-57 (VKRNVFTLFNALNFAIALAL). The Extracellular segment spans residues 58-64 (AFVQAWS). The chain crosses the membrane as a helical span at residues 65-84 (NLVFFAVICFNAFSGIVTEL). The Cytoplasmic segment spans residues 85–209 (RAKHMVDKLN…PINSRIMKSL (125 aa)). Residues 210–229 (DKLAGFTGKIIIPFGLALLL) form a helical membrane-spanning segment. The Extracellular segment spans residues 230 to 242 (EALLLKGLPLKSS). The helical transmembrane segment at 243-260 (VVNSSTALLGMLPKGIAL) threads the bilayer. The Cytoplasmic portion of the chain corresponds to 261 to 586 (LTITSLLTAV…FEGRRVVNNI (326 aa)). Residue aspartate 298 is the 4-aspartylphosphate intermediate of the active site. 2 residues coordinate Mg(2+): aspartate 532 and aspartate 536. A helical membrane pass occupies residues 587–606 (AHIAPIFLIKTIYSFLLAVI). The Extracellular portion of the chain corresponds to 607-624 (CIASALLGRSEWILIFPF). A helical transmembrane segment spans residues 625-645 (IPIQITMIDQFVEGFPPFVLT). At 646–663 (FERNIKPVEQNFLRKSML) the chain is on the cytoplasmic side. Residues 664 to 684 (RALPSALMVVFSVLFVKMFGA) traverse the membrane as a helical segment. The Extracellular portion of the chain corresponds to 685 to 689 (SQGWS). A helical membrane pass occupies residues 690–708 (ELEISTLLYYLLGSIGFLS). Over 709-716 (VFRACMPF) the chain is Cytoplasmic. Residues 717–739 (TLWRVLLIVWSVGGFLATALFPR) traverse the membrane as a helical segment. At 740–757 (IQKLLEISTLTEQTLPVY) the chain is on the extracellular side. The helical transmembrane segment at 758–777 (GVMMLVFTVIFILTSRYQAK) threads the bilayer. Lysine 778 is a topological domain (cytoplasmic).

This sequence belongs to the cation transport ATPase (P-type) (TC 3.A.3) family.

The protein resides in the cell membrane. The catalysed reaction is ATP + H2O = ADP + phosphate + H(+). In Streptococcus pneumoniae serotype 4 (strain ATCC BAA-334 / TIGR4), this protein is Probable cation-transporting ATPase exp7 (exp7).